Reading from the N-terminus, the 387-residue chain is Dynactin subunit 2 (387 aa).

Coiled-coil stretches lie at residues 99 to 125 (LQRC…DTGR), 256 to 282 (SQLD…SNAT), and 355 to 387 (TGVQ…QMIK).

Belongs to the dynactin subunit 2 family. Subunit of dynactin, a multiprotein complex associated with dynein.

It localises to the cytoplasm. It is found in the cytoskeleton. The protein resides in the membrane. Its function is as follows. Modulates cytoplasmic dynein binding to an organelle, and plays a role in prometaphase chromosome alignment and spindle organization during mitosis. The sequence is that of Dynactin subunit 2 from Anopheles gambiae (African malaria mosquito).